A 335-amino-acid chain; its full sequence is Tryptophan--tRNA ligase (335 aa).

Residues Gln19–Ser21 and Gly28–Asn29 contribute to the ATP site. The 'HIGH' region signature appears at Pro20 to Asn29. L-tryptophan is bound at residue Asp143. Residues Gly155 to Asp157, Ile192, and Lys201 to Ser205 contribute to the ATP site. A 'KMSKS' region motif is present at residues Lys201–Ser205.

It belongs to the class-I aminoacyl-tRNA synthetase family. As to quaternary structure, homodimer.

It is found in the cytoplasm. It catalyses the reaction tRNA(Trp) + L-tryptophan + ATP = L-tryptophyl-tRNA(Trp) + AMP + diphosphate + H(+). Catalyzes the attachment of tryptophan to tRNA(Trp). The protein is Tryptophan--tRNA ligase of Tropheryma whipplei (strain Twist) (Whipple's bacillus).